A 538-amino-acid chain; its full sequence is Putative cysteine ligase BshC (538 aa).

Residues 460–484 (KINEQIELLERMLKRNVEKKHEVEL) adopt a coiled-coil conformation.

It belongs to the BshC family.

Its function is as follows. Involved in bacillithiol (BSH) biosynthesis. May catalyze the last step of the pathway, the addition of cysteine to glucosamine malate (GlcN-Mal) to generate BSH. This chain is Putative cysteine ligase BshC, found in Bacillus thuringiensis (strain Al Hakam).